We begin with the raw amino-acid sequence, 202 residues long: Large ribosomal subunit protein uL5 (202 aa).

A compositionally biased stretch (low complexity) spans M1–A17. Residues M1–K30 form a disordered region.

Belongs to the universal ribosomal protein uL5 family. In terms of assembly, component of the large ribosomal subunit.

The protein resides in the nucleus. Its subcellular location is the cytoplasm. In terms of biological role, component of the ribosome, a large ribonucleoprotein complex responsible for the synthesis of proteins in the cell. The small ribosomal subunit (SSU) binds messenger RNAs (mRNAs) and translates the encoded message by selecting cognate aminoacyl-transfer RNA (tRNA) molecules. The large subunit (LSU) contains the ribosomal catalytic site termed the peptidyl transferase center (PTC), which catalyzes the formation of peptide bonds, thereby polymerizing the amino acids delivered by tRNAs into a polypeptide chain. The nascent polypeptides leave the ribosome through a tunnel in the LSU and interact with protein factors that function in enzymatic processing, targeting, and the membrane insertion of nascent chains at the exit of the ribosomal tunnel. In Dictyostelium discoideum (Social amoeba), this protein is Large ribosomal subunit protein uL5 (rpl11).